Consider the following 62-residue polypeptide: Alpha-elapitoxin-Nn2a (62 aa).

The tract at residues 1–20 is disordered; the sequence is LECHNQQSSQTPTTTDCSGG. 4 disulfide bridges follow: C3–C24, C17–C41, C43–C54, and C55–C60.

It belongs to the three-finger toxin family. Short-chain subfamily. Type I alpha-neurotoxin sub-subfamily. In terms of tissue distribution, expressed by the venom gland.

The protein resides in the secreted. Its function is as follows. Nicotinic acetylcholine receptor antagonist. Binds to muscle nicotinic acetylcholine receptor (nAChR) and inhibits acetylcholine from binding to the receptor, thereby impairing neuromuscular transmission. Produces peripheral paralysis by blocking neuromuscular transmission at the postsynaptic site. Induces concentration-dependent inhibition of indirect twitches and abolishes contractile responses of tissues to exogenous acetylcholine and carbachol, in the chick biventer cervicis nerve-muscle preparation at 100-300 nM (in vitro). Prior incubation of tissues with Indian polyvalent antivenom (1 ml/0.6 mg) prevents the neurotoxic effects at 100 nM (in vitro). Addition of Indian polyvalent antivenom (1 ml/0.6 mg) at the t90 time point does not reverse the neurotoxic effects (in vitro). Displays non-competitive antagonism of concentration-response curves to carbachol, with a pA2 of 8.01 (in vitro). The polypeptide is Alpha-elapitoxin-Nn2a (Naja naja (Indian cobra)).